Consider the following 63-residue polypeptide: Large ribosomal subunit protein eL37 (63 aa).

Zn(2+)-binding residues include Cys-20, Cys-23, Cys-35, and Cys-38. The C4-type zinc finger occupies Cys-20–Cys-38.

The protein belongs to the eukaryotic ribosomal protein eL37 family. It depends on Zn(2+) as a cofactor.

Binds to the 23S rRNA. In Thermococcus gammatolerans (strain DSM 15229 / JCM 11827 / EJ3), this protein is Large ribosomal subunit protein eL37.